The sequence spans 71 residues: Beta-defensin 10 (71 aa).

Positions 1–23 (MKTLCSLLLIGCLLFSYDTPVVG) are cleaved as a signal peptide. 3 disulfides stabilise this stretch: Cys37–Cys66, Cys44–Cys59, and Cys49–Cys67.

The protein belongs to the beta-defensin family.

The protein localises to the secreted. Functionally, has antibacterial activity. The protein is Beta-defensin 10 (Defb10) of Rattus norvegicus (Rat).